The chain runs to 276 residues: Undecaprenyl-diphosphatase (276 aa).

5 consecutive transmembrane segments (helical) span residues 84–104, 115–135, 188–208, 222–242, and 250–270; these read YRLGWYVIIGTIPICILGLFF, LWVVVTALVVFSGVIALAEYV, FGFLLAIPAVFASGLFSLPDA, QLLVATLIAFVLGLTAVAWLL, and MYWFVGYRVLVGTGMLVLLAT.

This sequence belongs to the UppP family.

It is found in the cell membrane. The catalysed reaction is di-trans,octa-cis-undecaprenyl diphosphate + H2O = di-trans,octa-cis-undecaprenyl phosphate + phosphate + H(+). Catalyzes the dephosphorylation of undecaprenyl diphosphate (UPP). Confers resistance to bacitracin. This Mycobacterium tuberculosis (strain ATCC 25177 / H37Ra) protein is Undecaprenyl-diphosphatase.